The following is a 106-amino-acid chain: Putative double-stranded DNA mimic protein VCM66_1163 (106 aa).

This sequence belongs to the putative dsDNA mimic protein family.

In terms of biological role, may act as a double-stranded DNA (dsDNA) mimic. Probably regulates the activity of a dsDNA-binding protein. This chain is Putative double-stranded DNA mimic protein VCM66_1163, found in Vibrio cholerae serotype O1 (strain M66-2).